The chain runs to 119 residues: Chorion class CA protein ERA.5 (119 aa).

The N-terminal stretch at 1–21 is a signal peptide; it reads MSTYTFVLFCLQICLIQNVYS. The segment at 22–55 is left arm; the sequence is QCLGRVGPGGPPVGPYGGPLGGPGYGPVGYGGCG. The tract at residues 56–103 is central domain; sequence GYGGSGIGNVAVAGELPVAGSSAVMGQVPVIGAVEFAGPACAVGSVSI. Residues 104-119 form a right arm region; sequence SGACGPTCGCGGSPYY.

This sequence belongs to the chorion protein family.

This protein is one of many from the eggshell of the silk moth. The sequence is that of Chorion class CA protein ERA.5 (ERA.5) from Bombyx mori (Silk moth).